The sequence spans 548 residues: Chaperonin GroEL 1 (548 aa).

Residues 30-33 (TLGP), Lys-51, 87-91 (DGTTT), Gly-415, 479-481 (NAA), and Asp-495 each bind ATP.

It belongs to the chaperonin (HSP60) family. Forms a cylinder of 14 subunits composed of two heptameric rings stacked back-to-back. Interacts with the co-chaperonin GroES.

The protein localises to the cytoplasm. It catalyses the reaction ATP + H2O + a folded polypeptide = ADP + phosphate + an unfolded polypeptide.. Functionally, together with its co-chaperonin GroES, plays an essential role in assisting protein folding. The GroEL-GroES system forms a nano-cage that allows encapsulation of the non-native substrate proteins and provides a physical environment optimized to promote and accelerate protein folding. The chain is Chaperonin GroEL 1 from Vibrio harveyi (Beneckea harveyi).